The following is a 160-amino-acid chain: Cyclic pyranopterin monophosphate synthase (160 aa).

Residues 75–77 (LCH) and 113–114 (ME) contribute to the substrate site. Aspartate 128 is a catalytic residue.

It belongs to the MoaC family. Homohexamer; trimer of dimers.

The enzyme catalyses (8S)-3',8-cyclo-7,8-dihydroguanosine 5'-triphosphate = cyclic pyranopterin phosphate + diphosphate. Its pathway is cofactor biosynthesis; molybdopterin biosynthesis. Its function is as follows. Catalyzes the conversion of (8S)-3',8-cyclo-7,8-dihydroguanosine 5'-triphosphate to cyclic pyranopterin monophosphate (cPMP). The polypeptide is Cyclic pyranopterin monophosphate synthase (Haemophilus influenzae (strain PittEE)).